Here is a 389-residue protein sequence, read N- to C-terminus: Flap endonuclease 1 (389 aa).

Residues 1 to 105 (MGIKGLTALL…GELAKRKDKR (105 aa)) are N-domain. Asp-34 serves as a coordination point for Mg(2+). Arg-71 contributes to the DNA binding site. The Mg(2+) site is built by Asp-87, Glu-159, Glu-161, Asp-180, and Asp-182. Positions 123 to 254 (EVEKLSKRTV…KTALKLIKEH (132 aa)) are I-domain. Residue Glu-159 coordinates DNA. 2 residues coordinate DNA: Gly-232 and Asp-234. Residue Asp-234 participates in Mg(2+) binding. Residues 338 to 346 (SQNRLESFF) form an interaction with PCNA region. Residues 356 to 389 (IGKRKVEETKSGKGSKAGLNKKSKGVSGYKSKKT) are disordered. A compositionally biased stretch (basic residues) spans 374 to 389 (LNKKSKGVSGYKSKKT).

Belongs to the XPG/RAD2 endonuclease family. FEN1 subfamily. As to quaternary structure, interacts with PCNA. Three molecules of FEN1 bind to one PCNA trimer with each molecule binding to one PCNA monomer. PCNA stimulates the nuclease activity without altering cleavage specificity. The cofactor is Mg(2+). Phosphorylated. Phosphorylation upon DNA damage induces relocalization to the nuclear plasma.

The protein resides in the nucleus. It is found in the nucleolus. Its subcellular location is the nucleoplasm. The protein localises to the mitochondrion. Its function is as follows. Structure-specific nuclease with 5'-flap endonuclease and 5'-3' exonuclease activities involved in DNA replication and repair. During DNA replication, cleaves the 5'-overhanging flap structure that is generated by displacement synthesis when DNA polymerase encounters the 5'-end of a downstream Okazaki fragment. It enters the flap from the 5'-end and then tracks to cleave the flap base, leaving a nick for ligation. Also involved in the long patch base excision repair (LP-BER) pathway, by cleaving within the apurinic/apyrimidinic (AP) site-terminated flap. Acts as a genome stabilization factor that prevents flaps from equilibrating into structures that lead to duplications and deletions. Also possesses 5'-3' exonuclease activity on nicked or gapped double-stranded DNA, and exhibits RNase H activity. Also involved in replication and repair of rDNA and in repairing mitochondrial DNA. This Ostreococcus tauri protein is Flap endonuclease 1.